Consider the following 280-residue polypeptide: 4-diphosphocytidyl-2-C-methyl-D-erythritol kinase (280 aa).

Residue Lys-8 is part of the active site. An ATP-binding site is contributed by 91–101 (PIEAGLAGGSS). Asp-133 is a catalytic residue.

The protein belongs to the GHMP kinase family. IspE subfamily.

The enzyme catalyses 4-CDP-2-C-methyl-D-erythritol + ATP = 4-CDP-2-C-methyl-D-erythritol 2-phosphate + ADP + H(+). Its pathway is isoprenoid biosynthesis; isopentenyl diphosphate biosynthesis via DXP pathway; isopentenyl diphosphate from 1-deoxy-D-xylulose 5-phosphate: step 3/6. In terms of biological role, catalyzes the phosphorylation of the position 2 hydroxy group of 4-diphosphocytidyl-2C-methyl-D-erythritol. The sequence is that of 4-diphosphocytidyl-2-C-methyl-D-erythritol kinase from Clostridium tetani (strain Massachusetts / E88).